Reading from the N-terminus, the 178-residue chain is ATP synthase subunit delta (178 aa).

The protein belongs to the ATPase delta chain family. In terms of assembly, F-type ATPases have 2 components, F(1) - the catalytic core - and F(0) - the membrane proton channel. F(1) has five subunits: alpha(3), beta(3), gamma(1), delta(1), epsilon(1). F(0) has three main subunits: a(1), b(2) and c(10-14). The alpha and beta chains form an alternating ring which encloses part of the gamma chain. F(1) is attached to F(0) by a central stalk formed by the gamma and epsilon chains, while a peripheral stalk is formed by the delta and b chains.

Its subcellular location is the cell inner membrane. Functionally, f(1)F(0) ATP synthase produces ATP from ADP in the presence of a proton or sodium gradient. F-type ATPases consist of two structural domains, F(1) containing the extramembraneous catalytic core and F(0) containing the membrane proton channel, linked together by a central stalk and a peripheral stalk. During catalysis, ATP synthesis in the catalytic domain of F(1) is coupled via a rotary mechanism of the central stalk subunits to proton translocation. Its function is as follows. This protein is part of the stalk that links CF(0) to CF(1). It either transmits conformational changes from CF(0) to CF(1) or is implicated in proton conduction. The protein is ATP synthase subunit delta of Hahella chejuensis (strain KCTC 2396).